Reading from the N-terminus, the 146-residue chain is Protein phosphatase 1 regulatory subunit 14D (146 aa).

Residues 1-16 (MLSSSAASCTSPNPDT) show a composition bias toward polar residues. A disordered region spans residues 1-57 (MLSSSAASCTSPNPDTDNPDKKVRWSSEKRRRASSTDSESKTHLDISKLPRSRRPSR). Basic and acidic residues-rich tracts occupy residues 18-28 (NPDKKVRWSSE) and 38-48 (SESKTHLDISK). An interaction with protein phosphatase 1 region spans residues 21-25 (KKVRW).

It belongs to the PP1 inhibitor family. Phosphorylated on several residues.

The protein localises to the cytoplasm. In terms of biological role, inhibitor of PPP1CA. Has inhibitory activity only when phosphorylated, creating a molecular switch for regulating the phosphorylation status of PPP1CA substrates and smooth muscle contraction. This Rattus norvegicus (Rat) protein is Protein phosphatase 1 regulatory subunit 14D (Ppp1r14d).